Consider the following 220-residue polypeptide: Ribosomal RNA large subunit methyltransferase E (220 aa).

S-adenosyl-L-methionine contacts are provided by G60, W62, D92, D108, and D133. Catalysis depends on K173, which acts as the Proton acceptor. Residues 197–220 are disordered; the sequence is RKPKASRDKSSETFILGRQLKQPR.

Belongs to the class I-like SAM-binding methyltransferase superfamily. RNA methyltransferase RlmE family.

It localises to the cytoplasm. The catalysed reaction is uridine(2552) in 23S rRNA + S-adenosyl-L-methionine = 2'-O-methyluridine(2552) in 23S rRNA + S-adenosyl-L-homocysteine + H(+). In terms of biological role, specifically methylates the uridine in position 2552 of 23S rRNA at the 2'-O position of the ribose in the fully assembled 50S ribosomal subunit. The chain is Ribosomal RNA large subunit methyltransferase E from Burkholderia ambifaria (strain ATCC BAA-244 / DSM 16087 / CCUG 44356 / LMG 19182 / AMMD) (Burkholderia cepacia (strain AMMD)).